The sequence spans 435 residues: Adenylosuccinate synthetase (435 aa).

Residues 11–17 (GDEGKGK) and 39–41 (GHT) each bind GTP. Catalysis depends on D12, which acts as the Proton acceptor. Residues D12 and G39 each contribute to the Mg(2+) site. IMP is bound by residues 12–15 (DEGK), 37–40 (NAGH), T128, R142, Q223, T238, and R302. H40 serves as the catalytic Proton donor. 298–304 (SVTGRPR) lines the substrate pocket. GTP-binding positions include R304, 330–332 (KLD), and 412–414 (STG).

It belongs to the adenylosuccinate synthetase family. In terms of assembly, homodimer. Requires Mg(2+) as cofactor.

The protein localises to the cytoplasm. It carries out the reaction IMP + L-aspartate + GTP = N(6)-(1,2-dicarboxyethyl)-AMP + GDP + phosphate + 2 H(+). Its pathway is purine metabolism; AMP biosynthesis via de novo pathway; AMP from IMP: step 1/2. In terms of biological role, plays an important role in the de novo pathway of purine nucleotide biosynthesis. Catalyzes the first committed step in the biosynthesis of AMP from IMP. The chain is Adenylosuccinate synthetase from Coxiella burnetii (strain Dugway 5J108-111).